The following is a 331-amino-acid chain: UDP-GalNAc:beta-1,3-N-acetylgalactosaminyltransferase 1 (331 aa).

The Cytoplasmic portion of the chain corresponds to 1–20 (MAPAVLTALPNRMSLRSLKW). Residues 21 to 43 (SLLLLSLLSFLVIWYLSLPHYNV) traverse the membrane as a helical; Signal-anchor for type II membrane protein segment. Residues 44-331 (IERVNWMYFY…VMLRNTTCHY (288 aa)) lie on the Lumenal side of the membrane. N-linked (GlcNAc...) asparagine glycosylation is found at asparagine 72, asparagine 154, asparagine 198, asparagine 212, and asparagine 326.

The protein belongs to the glycosyltransferase 31 family. The cofactor is Mg(2+). Detected in brain, ovary, kidney, uterus and stomach. In ovary, specifically expressed in follicular granulosa cells and shows particularly strong expression at later stages of follicle development.

The protein localises to the golgi apparatus membrane. It carries out the reaction a globoside Gb3Cer (d18:1(4E)) + UDP-N-acetyl-alpha-D-galactosamine = a globoside Gb4Cer (d18:1(4E)) + UDP + H(+). The protein operates within protein modification; protein glycosylation. Transfers N-acetylgalactosamine onto globotriaosylceramide. Plays a critical role in preimplantation stage embryonic development. In Mus musculus (Mouse), this protein is UDP-GalNAc:beta-1,3-N-acetylgalactosaminyltransferase 1.